A 111-amino-acid chain; its full sequence is Cornifelin homolog B (111 aa).

It belongs to the cornifelin family.

The protein is Cornifelin homolog B (cnfn-b) of Xenopus laevis (African clawed frog).